Consider the following 203-residue polypeptide: Peptidyl-tRNA hydrolase (203 aa).

A tRNA-binding site is contributed by Y14. The active-site Proton acceptor is the H19. 3 residues coordinate tRNA: Y64, N66, and N112.

Belongs to the PTH family. In terms of assembly, monomer.

It is found in the cytoplasm. The enzyme catalyses an N-acyl-L-alpha-aminoacyl-tRNA + H2O = an N-acyl-L-amino acid + a tRNA + H(+). Its function is as follows. Hydrolyzes ribosome-free peptidyl-tRNAs (with 1 or more amino acids incorporated), which drop off the ribosome during protein synthesis, or as a result of ribosome stalling. In terms of biological role, catalyzes the release of premature peptidyl moieties from peptidyl-tRNA molecules trapped in stalled 50S ribosomal subunits, and thus maintains levels of free tRNAs and 50S ribosomes. The protein is Peptidyl-tRNA hydrolase of Methylobacterium sp. (strain 4-46).